The sequence spans 185 residues: Peptidyl-tRNA hydrolase (185 aa).

Residue Y14 coordinates tRNA. Catalysis depends on H19, which acts as the Proton acceptor. TRNA contacts are provided by Y65, N67, and N113.

This sequence belongs to the PTH family. Monomer.

It is found in the cytoplasm. The catalysed reaction is an N-acyl-L-alpha-aminoacyl-tRNA + H2O = an N-acyl-L-amino acid + a tRNA + H(+). Hydrolyzes ribosome-free peptidyl-tRNAs (with 1 or more amino acids incorporated), which drop off the ribosome during protein synthesis, or as a result of ribosome stalling. Functionally, catalyzes the release of premature peptidyl moieties from peptidyl-tRNA molecules trapped in stalled 50S ribosomal subunits, and thus maintains levels of free tRNAs and 50S ribosomes. In Rickettsia africae (strain ESF-5), this protein is Peptidyl-tRNA hydrolase.